Consider the following 447-residue polypeptide: UDP-N-acetylmuramate--L-alanine ligase (447 aa).

Residue 108 to 114 coordinates ATP; the sequence is GSHGKTS.

The protein belongs to the MurCDEF family.

It localises to the cytoplasm. It catalyses the reaction UDP-N-acetyl-alpha-D-muramate + L-alanine + ATP = UDP-N-acetyl-alpha-D-muramoyl-L-alanine + ADP + phosphate + H(+). The protein operates within cell wall biogenesis; peptidoglycan biosynthesis. In terms of biological role, cell wall formation. The sequence is that of UDP-N-acetylmuramate--L-alanine ligase from Listeria monocytogenes serotype 4b (strain F2365).